The following is a 305-amino-acid chain: MLDTQIQELIIKWQKYLSLQKNYSNHTLISYNNDLKHFLEFMNYYNSDIVTMDYIKAADIRLMRSWLAKRKCDNFVTSSIARGLSAIKNFYKFLEKTAELHNHVVFSIKSPKKSKLLPKALSEEEVNISLDHIEEYGNSQWIEIRNKALLVLIYASGLRISEALSITKLHLQNLEFIKIMGKGSKERVIPWLAIARNLITEYLEKLPYELKDDEPIFRGKQGKKLQPPVFNRELIKLKRFYGLPEHLSAHSFRHSFASHLLENGADLRSIQELLGHKSLSTTQSYTKTSIKHLETAYVTAHPIKK.

The Core-binding (CB) domain maps to 4–95 (TQIQELIIKW…AIKNFYKFLE (92 aa)). Positions 116 to 298 (LLPKALSEEE…SIKHLETAYV (183 aa)) constitute a Tyr recombinase domain. Active-site residues include Arg159, Lys182, His250, Arg253, and His276. Residue Tyr285 is the O-(3'-phospho-DNA)-tyrosine intermediate of the active site.

Belongs to the 'phage' integrase family. XerC subfamily. In terms of assembly, forms a cyclic heterotetrameric complex composed of two molecules of XerC and two molecules of XerD.

It localises to the cytoplasm. In terms of biological role, site-specific tyrosine recombinase, which acts by catalyzing the cutting and rejoining of the recombining DNA molecules. The XerC-XerD complex is essential to convert dimers of the bacterial chromosome into monomers to permit their segregation at cell division. It also contributes to the segregational stability of plasmids. This chain is Tyrosine recombinase XerC, found in Rickettsia bellii (strain OSU 85-389).